Consider the following 267-residue polypeptide: NAD kinase (267 aa).

The Proton acceptor role is filled by aspartate 45. Residues 45–46 (DG), 121–122 (NE), arginine 147, aspartate 149, 160–165 (TAYSKS), and alanine 184 each bind NAD(+).

It belongs to the NAD kinase family. A divalent metal cation serves as cofactor.

Its subcellular location is the cytoplasm. The enzyme catalyses NAD(+) + ATP = ADP + NADP(+) + H(+). In terms of biological role, involved in the regulation of the intracellular balance of NAD and NADP, and is a key enzyme in the biosynthesis of NADP. Catalyzes specifically the phosphorylation on 2'-hydroxyl of the adenosine moiety of NAD to yield NADP. The protein is NAD kinase of Lactobacillus acidophilus (strain ATCC 700396 / NCK56 / N2 / NCFM).